The primary structure comprises 217 residues: Protein-L-isoaspartate O-methyltransferase (217 aa).

The active site involves Ser-61.

It belongs to the methyltransferase superfamily. L-isoaspartyl/D-aspartyl protein methyltransferase family.

It localises to the cytoplasm. The catalysed reaction is [protein]-L-isoaspartate + S-adenosyl-L-methionine = [protein]-L-isoaspartate alpha-methyl ester + S-adenosyl-L-homocysteine. Catalyzes the methyl esterification of L-isoaspartyl residues in peptides and proteins that result from spontaneous decomposition of normal L-aspartyl and L-asparaginyl residues. It plays a role in the repair and/or degradation of damaged proteins. This is Protein-L-isoaspartate O-methyltransferase from Brucella anthropi (strain ATCC 49188 / DSM 6882 / CCUG 24695 / JCM 21032 / LMG 3331 / NBRC 15819 / NCTC 12168 / Alc 37) (Ochrobactrum anthropi).